A 765-amino-acid polypeptide reads, in one-letter code: Endosialin (765 aa).

The first 17 residues, methionine 1–glycine 17, serve as a signal peptide directing secretion. Topologically, residues glutamine 18–leucine 695 are extracellular. Residues glycine 30–cysteine 156 enclose the C-type lectin domain. Intrachain disulfides connect cysteine 131–cysteine 147, cysteine 164–cysteine 213, cysteine 203–cysteine 230, cysteine 316–cysteine 326, cysteine 322–cysteine 335, and cysteine 337–cysteine 350. Residues glycine 162 to glycine 232 form the Sushi domain. Residues aspartate 312–serine 351 form the EGF-like; calcium-binding domain. O-linked (GalNAc...) threonine glycosylation is found at threonine 401, threonine 428, threonine 448, threonine 456, threonine 459, and threonine 466. O-linked (GalNAc...) serine glycosylation is found at serine 467 and serine 470. Threonine 472 carries an O-linked (GalNAc...) threonine glycan. Serine 477 carries O-linked (GalNAc...) serine glycosylation. O-linked (GalNAc...) threonine glycans are attached at residues threonine 488, threonine 517, threonine 520, threonine 535, threonine 552, threonine 554, threonine 556, threonine 570, threonine 571, threonine 604, and threonine 613. Residues methionine 548–alanine 675 are disordered. The segment covering proline 622 to arginine 633 has biased composition (pro residues). 2 O-linked (GalNAc...) serine glycosylation sites follow: serine 626 and serine 627. 2 O-linked (GalNAc...) threonine glycosylation sites follow: threonine 635 and threonine 638. Polar residues predominate over residues threonine 635–tyrosine 647. O-linked (GalNAc...) serine glycans are attached at residues serine 639 and serine 640. The O-linked (GalNAc...) threonine glycan is linked to threonine 644. O-linked (GalNAc...) serine glycosylation is present at serine 663. A glycan (O-linked (GalNAc...) threonine) is linked at threonine 673. The chain crosses the membrane as a helical span at residues leucine 696 to valine 716. At tyrosine 717–valine 765 the chain is on the cytoplasmic side. Serine 754 carries the phosphoserine modification.

Interacts with PDGFRA; this interaction promotes PDGF receptor signaling pathway. Interacts with integrin beta-1/ITGB1. Interacts with insulin receptor/INSR; this interaction diminishes INSR autophosphorylation. In terms of processing, O-glycosylated by sialylated oligosaccharides. Post-translationally, may be N-glycosylated. Expressed in cell lines derived from endothelial cells, embryonic fibroblasts and preadipocytes. Expressed in skeletal muscle by a subset of pericytes.

The protein resides in the membrane. Its function is as follows. Cell surface glycoprotein involved in various biological processes including angiogenesis, immune response modulation, and tissue remodeling and repair. Participates in pericyte proliferation through positive modulation of the PDGF receptor signaling pathway. Acts as a scaffold for factor X, triggering allosteric changes and the spatial re-alignment of factor X with the TF-factor VIIa complex, thereby enhancing coagulation activation. Modulates the insulin signaling pathway by interacting with insulin receptor/INSR and by diminishing its capacity to be autophosphorylated in response to insulin. Also regulates LPS-induced inflammatory responses in macrophages by favoring production of proinflammatory cytokines. The polypeptide is Endosialin (Cd248) (Mus musculus (Mouse)).